A 189-amino-acid chain; its full sequence is UPF0494 membrane protein C977.06 (189 aa).

A run of 3 helical transmembrane segments spans residues 78-98 (WPLL…NFEV), 120-140 (IWGP…GLIY), and 148-168 (AIPL…VAMV).

This sequence belongs to the UPF0494 family.

The protein localises to the membrane. This chain is UPF0494 membrane protein C977.06, found in Schizosaccharomyces pombe (strain 972 / ATCC 24843) (Fission yeast).